A 140-amino-acid chain; its full sequence is Putative pre-16S rRNA nuclease (140 aa).

The protein belongs to the YqgF nuclease family.

It localises to the cytoplasm. Could be a nuclease involved in processing of the 5'-end of pre-16S rRNA. The protein is Putative pre-16S rRNA nuclease of Halalkalibacterium halodurans (strain ATCC BAA-125 / DSM 18197 / FERM 7344 / JCM 9153 / C-125) (Bacillus halodurans).